The following is a 2521-amino-acid chain: MEPHVLGAVLYWLLLPCALLAACLLRFSGLSLVYLLFLLLLPWFPGPTRCGLQGHTGRLLRALLGLSLLFLVAHLALQICLHIVPRLDQLLGPSCSRWETLSRHIGVTRLDLKDIPNAIRLVAPDLGILVVSSVCLGICGRLARNTRQSPHPRELDDDERDVDASPTAGLQEAATLAPTRRSRLAARFRVTAHWLLVAAGRVLAVTLLALAGIAHPSALSSVYLLLFLALCTWWACHFPISTRGFSRLCVAVGCFGAGHLICLYCYQMPLAQALLPPAGIWARVLGLKDFVGPTNCSSPHALVLNTGLDWPVYASPGVLLLLCYATASLRKLRAYRPSGQRKEAAKGYEARELELAELDQWPQERESDQHVVPTAPDTEADNCIVHELTGQSSVLRRPVRPKRAEPREASPLHSLGHLIMDQSYVCALIAMMVWSITYHSWLTFVLLLWACLIWTVRSRHQLAMLCSPCILLYGMTLCCLRYVWAMDLRPELPTTLGPVSLRQLGLEHTRYPCLDLGAMLLYTLTFWLLLRQFVKEKLLKWAESPAALTEVTVADTEPTRTQTLLQSLGELVKGVYAKYWIYVCAGMFIVVSFAGRLVVYKIVYMFLFLLCLTLFQVYYSLWRKLLKAFWWLVVAYTMLVLIAVYTFQFQDFPAYWRNLTGFTDEQLGDLGLEQFSVSELFSSILVPGFFLLACILQLHYFHRPFMQLTDMEHVSLPGTRLPRWAHRQDAVSGTPLLREEQQEHQQQQQEEEEEEEDSRDEGLGVATPHQATQVPEGAAKWGLVAERLLELAAGFSDVLSRVQVFLRRLLELHVFKLVALYTVWVALKEVSVMNLLLVVLWAFALPYPRFRPMASCLSTVWTCVIIVCKMLYQLKVVNPQEYSSNCTEPFPNSTNLLPTEISQSLLYRGPVDPANWFGVRKGFPNLGYIQNHLQVLLLLVFEAIVYRRQEHYRRQHQLAPLPAQAVFASGTRQQLDQDLLGCLKYFINFFFYKFGLEICFLMAVNVIGQRMNFLVTLHGCWLVAILTRRHRQAIARLWPNYCLFLALFLLYQYLLCLGMPPALCIDYPWRWSRAVPMNSALIKWLYLPDFFRAPNSTNLISDFLLLLCASQQWQVFSAERTEEWQRMAGVNTDRLEPLRGEPNPVPNFIHCRSYLDMLKVAVFRYLFWLVLVVVFVTGATRISIFGLGYLLACFYLLLFGTALLQRDTRARLVLWDCLILYNVTVIISKNMLSLLACVFVEQMQTGFCWVIQLFSLVCTVKGYYDPKEMMDRDQDCLLPVEEAGIIWDSVCFFFLLLQRRVFLSHYYLHVRADLQATALLASRGFALYNAANLKSIDFHRRIEEKSLAQLKRQMERIRAKQEKHRQGRVDRSRPQDTLGPKDPGLEPGPDSPGGSSPPRRQWWRPWLDHATVIHSGDYFLFESDSEEEEEAVPEDPRPSAQSAFQLAYQAWVTNAQAVLRRRQQEQEQARQEQAGQLPTGGGPSQEVEPAEGPEEAAAGRSHVVQRVLSTAQFLWMLGQALVDELTRWLQEFTRHHGTMSDVLRAERYLLTQELLQGGEVHRGVLDQLYTSQAEATLPGPTEAPNAPSTVSSGLGAEEPLSSMTDDMGSPLSTGYHTRSGSEEAVTDPGEREAGASLYQGLMRTASELLLDRRLRIPELEEAELFAEGQGRALRLLRAVYQCVAAHSELLCYFIIILNHMVTASAGSLVLPVLVFLWAMLSIPRPSKRFWMTAIVFTEIAVVVKYLFQFGFFPWNSHVVLRRYENKPYFPPRILGLEKTDGYIKYDLVQLMALFFHRSQLLCYGLWDHEEDSPSKEHDKSGEEEQGAEEGPGVPAATTEDHIQVEARVGPTDGTPEPQVELRPRDTRRISLRFRRRKKEGPARKGAAAIEAEDREEEEGEEEKEAPTGREKRPSRSGGRVRAAGRRLQGFCLSLAQGTYRPLRRFFHDILHTKYRAATDVYALMFLADVVDFIIIIFGFWAFGKHSAATDITSSLSDDQVPEAFLVMLLIQFSTMVVDRALYLRKTVLGKLAFQVALVLAIHLWMFFILPAVTERMFNQNVVAQLWYFVKCIYFALSAYQIRCGYPTRILGNFLTKKYNHLNLFLFQGFRLVPFLVELRAVMDWVWTDTTLSLSSWMCVEDIYANIFIIKCSRETEKKYPQPKGQKKKKIVKYGMGGLIILFLIAIIWFPLLFMSLVRSVVGVVNQPIDVTVTLKLGGYEPLFTMSAQQPSIIPFTAQAYEELSRQFDPQPLAMQFISQYSPEDIVTAQIEGSSGALWRISPPSRAQMKRELYNGTADITLRFTWNFQRDLAKGGTVEYANEKHMLALAPNSTARRQLASLLEGTSDQSVVIPNLFPKYIRAPNGPEANPVKQLQPNEEADYLGVRIQLRREQGAGATGFLEWWVIELQECRTDCNLLPMVIFSDKVSPPSLGFLAGYGIMGLYVSIVLVIGKFVRGFFSEISHSIMFEELPCVDRILKLCQDIFLVRETRELELEEELYAKLIFLYRSPETMIKWTREKE.

Residues 1–12 (MEPHVLGAVLYW) lie on the Cytoplasmic side of the membrane. A helical membrane pass occupies residues 13–25 (LLLPCALLAACLL). At 26–28 (RFS) the chain is on the extracellular side. The chain crosses the membrane as a helical span at residues 29–44 (GLSLVYLLFLLLLPWF). The Cytoplasmic segment spans residues 45 to 58 (PGPTRCGLQGHTGR). A helical transmembrane segment spans residues 59–81 (LLRALLGLSLLFLVAHLALQICL). The Extracellular portion of the chain corresponds to 82–121 (HIVPRLDQLLGPSCSRWETLSRHIGVTRLDLKDIPNAIRL). Residues 122 to 138 (VAPDLGILVVSSVCLGI) traverse the membrane as a helical segment. Residues 139-194 (CGRLARNTRQSPHPRELDDDERDVDASPTAGLQEAATLAPTRRSRLAARFRVTAHW) are Cytoplasmic-facing. Residues 195–214 (LLVAAGRVLAVTLLALAGIA) traverse the membrane as a helical segment. The Extracellular portion of the chain corresponds to 215-216 (HP). Residues 217–236 (SALSSVYLLLFLALCTWWAC) traverse the membrane as a helical segment. Residues 237–247 (HFPISTRGFSR) are Cytoplasmic-facing. The helical transmembrane segment at 248-268 (LCVAVGCFGAGHLICLYCYQM) threads the bilayer. The Extracellular segment spans residues 269–309 (PLAQALLPPAGIWARVLGLKDFVGPTNCSSPHALVLNTGLD). An N-linked (GlcNAc...) asparagine glycan is attached at N295. The helical transmembrane segment at 310 to 330 (WPVYASPGVLLLLCYATASLR) threads the bilayer. Topologically, residues 331 to 417 (KLRAYRPSGQ…EASPLHSLGH (87 aa)) are cytoplasmic. Residues 418–438 (LIMDQSYVCALIAMMVWSITY) traverse the membrane as a helical segment. At 439 to 440 (HS) the chain is on the extracellular side. Residues 441–456 (WLTFVLLLWACLIWTV) traverse the membrane as a helical segment. At 457 to 461 (RSRHQ) the chain is on the cytoplasmic side. The chain crosses the membrane as a helical span at residues 462–484 (LAMLCSPCILLYGMTLCCLRYVW). Topologically, residues 485–512 (AMDLRPELPTTLGPVSLRQLGLEHTRYP) are extracellular. The helical transmembrane segment at 513 to 530 (CLDLGAMLLYTLTFWLLL) threads the bilayer. Residues 531-574 (RQFVKEKLLKWAESPAALTEVTVADTEPTRTQTLLQSLGELVKG) lie on the Cytoplasmic side of the membrane. The chain crosses the membrane as a helical span at residues 575–595 (VYAKYWIYVCAGMFIVVSFAG). R596 is a topological domain (extracellular). Residues 597-617 (LVVYKIVYMFLFLLCLTLFQV) form a helical membrane-spanning segment. Residues 618-627 (YYSLWRKLLK) lie on the Cytoplasmic side of the membrane. A helical membrane pass occupies residues 628–649 (AFWWLVVAYTMLVLIAVYTFQF). At 650-679 (QDFPAYWRNLTGFTDEQLGDLGLEQFSVSE) the chain is on the extracellular side. A helical membrane pass occupies residues 680–696 (LFSSILVPGFFLLACIL). The Cytoplasmic segment spans residues 697–816 (QLHYFHRPFM…RRLLELHVFK (120 aa)). Residue T734 is modified to Phosphothreonine. Residues 738-769 (REEQQEHQQQQQEEEEEEEDSRDEGLGVATPH) are disordered. Positions 749 to 759 (QEEEEEEEDSR) are enriched in acidic residues. S758 is modified (phosphoserine). Residues 817–828 (LVALYTVWVALK) traverse the membrane as a helical segment. The Extracellular portion of the chain corresponds to 829–831 (EVS). Residues 832–845 (VMNLLLVVLWAFAL) form a helical membrane-spanning segment. Over 846 to 859 (PYPRFRPMASCLST) the chain is Cytoplasmic. The helical transmembrane segment at 860–874 (VWTCVIIVCKMLYQL) threads the bilayer. Over 875–926 (KVVNPQEYSSNCTEPFPNSTNLLPTEISQSLLYRGPVDPANWFGVRKGFPNL) the chain is Extracellular. Residues 927 to 954 (GYIQNHLQVLLLLVFEAIVYRRQEHYRR) traverse the membrane as a helical segment. Over 955 to 994 (QHQLAPLPAQAVFASGTRQQLDQDLLGCLKYFINFFFYKF) the chain is Cytoplasmic. A helical membrane pass occupies residues 995-1010 (GLEICFLMAVNVIGQR). At 1011-1012 (MN) the chain is on the extracellular side. The chain crosses the membrane as a helical span at residues 1013–1028 (FLVTLHGCWLVAILTR). Over 1029–1041 (RHRQAIARLWPNY) the chain is Cytoplasmic. The chain crosses the membrane as a helical span at residues 1042-1057 (CLFLALFLLYQYLLCL). The Extracellular portion of the chain corresponds to 1058–1096 (GMPPALCIDYPWRWSRAVPMNSALIKWLYLPDFFRAPNS). The chain crosses the membrane as a helical span at residues 1097-1118 (TNLISDFLLLLCASQQWQVFSA). Residues 1119 to 1153 (ERTEEWQRMAGVNTDRLEPLRGEPNPVPNFIHCRS) lie on the Cytoplasmic side of the membrane. The helical transmembrane segment at 1154-1180 (YLDMLKVAVFRYLFWLVLVVVFVTGAT) threads the bilayer. The Extracellular segment spans residues 1181–1185 (RISIF). Residues 1186 to 1204 (GLGYLLACFYLLLFGTALL) traverse the membrane as a helical segment. Over 1205–1217 (QRDTRARLVLWDC) the chain is Cytoplasmic. A helical membrane pass occupies residues 1218–1236 (LILYNVTVIISKNMLSLLA). Topologically, residues 1237 to 1285 (CVFVEQMQTGFCWVIQLFSLVCTVKGYYDPKEMMDRDQDCLLPVEEAGI) are extracellular. The helical transmembrane segment at 1286–1302 (IWDSVCFFFLLLQRRVF) threads the bilayer. At 1303–1656 (LSHYYLHVRA…ELLLDRRLRI (354 aa)) the chain is on the cytoplasmic side. The stretch at 1339 to 1368 (HRRIEEKSLAQLKRQMERIRAKQEKHRQGR) forms a coiled coil. Disordered stretches follow at residues 1356-1402 (RIRA…RRQW), 1462-1498 (RQQEQEQARQEQAGQLPTGGGPSQEVEPAEGPEEAAA), and 1576-1630 (TLPG…DPGE). Positions 1385–1398 (LEPGPDSPGGSSPP) are enriched in low complexity. 2 positions are modified to phosphoserine: S1391 and S1396. Phosphoserine is present on residues S1636 and S1646. The chain crosses the membrane as a helical span at residues 1657–1700 (PELEEAELFAEGQGRALRLLRAVYQCVAAHSELLCYFIIILNHM). Residues 1701 to 1704 (VTAS) lie on the Extracellular side of the membrane. The chain crosses the membrane as a helical span at residues 1705–1720 (AGSLVLPVLVFLWAML). Topologically, residues 1721-1728 (SIPRPSKR) are cytoplasmic. A helical transmembrane segment spans residues 1729 to 1747 (FWMTAIVFTEIAVVVKYLF). Residues 1748–1779 (QFGFFPWNSHVVLRRYENKPYFPPRILGLEKT) lie on the Extracellular side of the membrane. A helical transmembrane segment spans residues 1780–1801 (DGYIKYDLVQLMALFFHRSQLL). Residues 1802-1960 (CYGLWDHEED…HTKYRAATDV (159 aa)) are Cytoplasmic-facing. Residues 1811-1822 (DSPSKEHDKSGE) show a composition bias toward basic and acidic residues. The segment at 1811 to 1921 (DSPSKEHDKS…RPSRSGGRVR (111 aa)) is disordered. At T1854 the chain carries Phosphothreonine. A compositionally biased stretch (basic and acidic residues) spans 1859 to 1868 (VELRPRDTRR). The span at 1869 to 1878 (ISLRFRRRKK) shows a compositional bias: basic residues. The segment covering 1890–1903 (EAEDREEEEGEEEK) has biased composition (acidic residues). Over residues 1904 to 1913 (EAPTGREKRP) the composition is skewed to basic and acidic residues. The chain crosses the membrane as a helical span at residues 1961 to 1980 (YALMFLADVVDFIIIIFGFW). At 1981–2000 (AFGKHSAATDITSSLSDDQV) the chain is on the extracellular side. The chain crosses the membrane as a helical span at residues 2001–2017 (PEAFLVMLLIQFSTMVV). Topologically, residues 2018-2031 (DRALYLRKTVLGKL) are cytoplasmic. A helical membrane pass occupies residues 2032–2052 (AFQVALVLAIHLWMFFILPAV). The Extracellular portion of the chain corresponds to 2053 to 2060 (TERMFNQN). A helical transmembrane segment spans residues 2061-2076 (VVAQLWYFVKCIYFAL). The Cytoplasmic segment spans residues 2077-2176 (SAYQIRCGYP…KKKIVKYGMG (100 aa)). The helical transmembrane segment at 2177–2197 (GLIILFLIAIIWFPLLFMSLV) threads the bilayer. Over 2198-2431 (RSVVGVVNQP…IFSDKVSPPS (234 aa)) the chain is Extracellular. N2294 is a glycosylation site (N-linked (GlcNAc...) asparagine). The cysteines at positions 2411 and 2415 are disulfide-linked. The chain crosses the membrane as a helical span at residues 2432 to 2452 (LGFLAGYGIMGLYVSIVLVIG). The Cytoplasmic segment spans residues 2453 to 2521 (KFVRGFFSEI…TMIKWTREKE (69 aa)).

This sequence belongs to the PIEZO (TC 1.A.75) family. In terms of assembly, homotrimer; the homotrimer forms a propeller-shaped Piezo channel with a cation-ion conducting pore. Heterotrimeric interaction may occur between PIEZO1 and PIEZO2. Interacts with PKD2. Interacts with STOML3. Interacts with TMC1, TMC2, PCDH15 and CIB2; the interaction may be part of the MET complex. Interacts with MDFIC (via C-terminus); the interaction prolongs Piezo channel inactivation. Interacts with MDFI (via C-terminus); the interaction prolongs Piezo channel inactivation. Expressed in numerous tissues. In normal brain, expressed exclusively in neurons, not in astrocytes. In Alzheimer disease brains, expressed in about half of the activated astrocytes located around classical senile plaques. In Parkinson disease substantia nigra, not detected in melanin-containing neurons nor in activated astrocytes. Expressed in erythrocytes (at protein level). Expressed in myoblasts (at protein level).

It is found in the endoplasmic reticulum membrane. It localises to the endoplasmic reticulum-Golgi intermediate compartment membrane. The protein localises to the cell membrane. Its subcellular location is the cell projection. The protein resides in the lamellipodium membrane. It catalyses the reaction K(+)(in) = K(+)(out). The enzyme catalyses Na(+)(in) = Na(+)(out). It carries out the reaction Ca(2+)(in) = Ca(2+)(out). The catalysed reaction is Mg(2+)(in) = Mg(2+)(out). Regulated by auxillary subunits MDFIC and MDFI. Down-regulated by phosphatidylserines exposed on the cell surface. Divalent ions decrease the single-channel permeability of K(+). Functionally, pore-forming subunit of the mechanosensitive non-specific cation Piezo channel required for rapidly adapting mechanically activated (MA) currents and has a key role in sensing touch and tactile pain. Piezo channels are homotrimeric three-blade propeller-shaped structures that utilize a cap-motion and plug-and-latch mechanism to gate their ion-conducting pathways. Generates currents characterized by a linear current-voltage relationship that are sensitive to ruthenium red and gadolinium. Conductance to monovalent alkali ions is highest for K(+), intermediate for Na(+) and lowest for Li(+). Divalent ions except for Mn(2+) permeate the channel but more slowly than the monovalent ions and they also reduce K(+) currents. Plays a key role in epithelial cell adhesion by maintaining integrin activation through R-Ras recruitment to the ER, most probably in its activated state, and subsequent stimulation of calpain signaling. In inner ear hair cells, PIEZO1/2 subunits may constitute part of the mechanotransducer (MET) non-selective cation channel complex where they may act as pore-forming ion-conducting component in the complex. In the kidney, may contribute to the detection of intraluminal pressure changes and to urine flow sensing. Acts as a shear-stress sensor that promotes endothelial cell organization and alignment in the direction of blood flow through calpain activation. Plays a key role in blood vessel formation and vascular structure in both development and adult physiology. Acts as a sensor of phosphatidylserine (PS) flipping at the plasma membrane and governs morphogenesis of muscle cells. In myoblasts, flippase-mediated PS enrichment at the inner leaflet of plasma membrane triggers channel activation and Ca2+ influx followed by Rho GTPases signal transduction, leading to assembly of cortical actomyosin fibers and myotube formation. The chain is Piezo-type mechanosensitive ion channel component 1 from Homo sapiens (Human).